The primary structure comprises 288 residues: 3-methyl-2-oxobutanoate hydroxymethyltransferase (288 aa).

The Mg(2+) site is built by Asp48 and Asp87. 3-methyl-2-oxobutanoate is bound by residues 48 to 49 (DS), Asp87, and Lys116. Glu118 is a Mg(2+) binding site. Catalysis depends on Glu185, which acts as the Proton acceptor.

Belongs to the PanB family. In terms of assembly, homodecamer; pentamer of dimers. It depends on Mg(2+) as a cofactor.

The protein resides in the cytoplasm. It carries out the reaction 3-methyl-2-oxobutanoate + (6R)-5,10-methylene-5,6,7,8-tetrahydrofolate + H2O = 2-dehydropantoate + (6S)-5,6,7,8-tetrahydrofolate. It participates in cofactor biosynthesis; coenzyme A biosynthesis. Catalyzes the reversible reaction in which hydroxymethyl group from 5,10-methylenetetrahydrofolate is transferred onto alpha-ketoisovalerate to form ketopantoate. The polypeptide is 3-methyl-2-oxobutanoate hydroxymethyltransferase (Hyperthermus butylicus (strain DSM 5456 / JCM 9403 / PLM1-5)).